The sequence spans 84 residues: Putative pelota-like protein YCL001W-B (84 aa).

This sequence belongs to the eukaryotic release factor 1 family. Pelota subfamily. Highly divergent.

This chain is Putative pelota-like protein YCL001W-B, found in Saccharomyces cerevisiae (strain ATCC 204508 / S288c) (Baker's yeast).